A 264-amino-acid chain; its full sequence is Thiazole synthase (264 aa).

The Schiff-base intermediate with DXP role is filled by Lys106. 1-deoxy-D-xylulose 5-phosphate-binding positions include Gly167, 193–194 (AG), and 215–216 (NT).

It belongs to the ThiG family. In terms of assembly, homotetramer. Forms heterodimers with either ThiH or ThiS.

It localises to the cytoplasm. It carries out the reaction [ThiS sulfur-carrier protein]-C-terminal-Gly-aminoethanethioate + 2-iminoacetate + 1-deoxy-D-xylulose 5-phosphate = [ThiS sulfur-carrier protein]-C-terminal Gly-Gly + 2-[(2R,5Z)-2-carboxy-4-methylthiazol-5(2H)-ylidene]ethyl phosphate + 2 H2O + H(+). It functions in the pathway cofactor biosynthesis; thiamine diphosphate biosynthesis. Catalyzes the rearrangement of 1-deoxy-D-xylulose 5-phosphate (DXP) to produce the thiazole phosphate moiety of thiamine. Sulfur is provided by the thiocarboxylate moiety of the carrier protein ThiS. In vitro, sulfur can be provided by H(2)S. This chain is Thiazole synthase, found in Xylella fastidiosa (strain 9a5c).